Reading from the N-terminus, the 178-residue chain is Ribosome maturation factor RimM (178 aa).

The region spanning 101–178 (DGEYYWYQLQ…EMKVEWDADF (78 aa)) is the PRC barrel domain.

It belongs to the RimM family. As to quaternary structure, binds ribosomal protein uS19.

It localises to the cytoplasm. In terms of biological role, an accessory protein needed during the final step in the assembly of 30S ribosomal subunit, possibly for assembly of the head region. Essential for efficient processing of 16S rRNA. May be needed both before and after RbfA during the maturation of 16S rRNA. It has affinity for free ribosomal 30S subunits but not for 70S ribosomes. This is Ribosome maturation factor RimM from Pseudomonas fluorescens (strain ATCC BAA-477 / NRRL B-23932 / Pf-5).